The sequence spans 454 residues: Retinoblastoma-binding protein homolog 5 (454 aa).

WD repeat units follow at residues 23–64 (LQNA…RTFS), 65–104 (AHCL…LLHR), 153–192 (SSDE…CVAW), 196–235 (NTVQ…HQRG), 248–288 (VNKA…LIKI), and 292–330 (NKGE…NWSA).

In terms of assembly, component of the SET2 complex (also known as the SET1/COMPASS complex), which contains at least set-2, swd-2.1, cfp-1, rbbp-5, wdr-5.1, dpy-30 and ash-2.

It localises to the nucleus. Functionally, required for di- and trimethylation at 'Lys-4' of histone H3. Regulates left/right asymmetry of ASE sensory neurons, via its role as a component of the SET2 complex. The polypeptide is Retinoblastoma-binding protein homolog 5 (rbbp-5) (Caenorhabditis elegans).